A 292-amino-acid polypeptide reads, in one-letter code: Homoserine kinase (292 aa).

Position 80-90 (80-90 (PLARGLGSSSS)) interacts with ATP.

It belongs to the GHMP kinase family. Homoserine kinase subfamily.

It localises to the cytoplasm. The enzyme catalyses L-homoserine + ATP = O-phospho-L-homoserine + ADP + H(+). It participates in amino-acid biosynthesis; L-threonine biosynthesis; L-threonine from L-aspartate: step 4/5. Its function is as follows. Catalyzes the ATP-dependent phosphorylation of L-homoserine to L-homoserine phosphate. This Leuconostoc mesenteroides subsp. mesenteroides (strain ATCC 8293 / DSM 20343 / BCRC 11652 / CCM 1803 / JCM 6124 / NCDO 523 / NBRC 100496 / NCIMB 8023 / NCTC 12954 / NRRL B-1118 / 37Y) protein is Homoserine kinase.